The primary structure comprises 88 residues: Molybdopterin synthase sulfur carrier subunit (88 aa).

1-thioglycine; alternate is present on glycine 88. At glycine 88 the chain carries Glycyl adenylate; alternate.

Belongs to the MoaD family. MOCS2A subfamily. As to quaternary structure, heterotetramer; composed of 2 small (MOCS2A) and 2 large (MOCS2B) subunits. C-terminal thiocarboxylation occurs in 2 steps, it is first acyl-adenylated (-COAMP) via the hesA/moeB/thiF part of MOCS3, then thiocarboxylated (-COSH) via the rhodanese domain of MOCS3.

It is found in the cytoplasm. Its subcellular location is the cytosol. It functions in the pathway cofactor biosynthesis; molybdopterin biosynthesis. Its function is as follows. Acts as a sulfur carrier required for molybdopterin biosynthesis. Component of the molybdopterin synthase complex that catalyzes the conversion of precursor Z into molybdopterin by mediating the incorporation of 2 sulfur atoms into precursor Z to generate a dithiolene group. In the complex, serves as sulfur donor by being thiocarboxylated (-COSH) at its C-terminus by MOCS3. After interaction with MOCS2B, the sulfur is then transferred to precursor Z to form molybdopterin. The protein is Molybdopterin synthase sulfur carrier subunit of Mus musculus (Mouse).